The chain runs to 352 residues: Probable RNA methyltransferase Mpe_A3613 (352 aa).

Glutamate 88 serves as the catalytic Proton acceptor. The 227-residue stretch at 91–317 folds into the Radical SAM core domain; the sequence is LLPRDGLCVS…TKLRRSAGQD (227 aa). Cysteine 98 and cysteine 322 are joined by a disulfide. Residues cysteine 105, cysteine 109, and cysteine 112 each coordinate [4Fe-4S] cluster. Residues 150–151, serine 180, 203–205, and asparagine 279 contribute to the S-adenosyl-L-methionine site; these read GE and SLH. Cysteine 322 (S-methylcysteine intermediate) is an active-site residue.

It belongs to the radical SAM superfamily. RlmN family. [4Fe-4S] cluster is required as a cofactor.

Its subcellular location is the cytoplasm. The polypeptide is Probable RNA methyltransferase Mpe_A3613 (Methylibium petroleiphilum (strain ATCC BAA-1232 / LMG 22953 / PM1)).